A 904-amino-acid chain; its full sequence is Anoctamin-5 (904 aa).

Over 1–290 (MVEQEGLTAK…HLIRNYFGEK (290 aa)) the chain is Cytoplasmic. A helical membrane pass occupies residues 291 to 311 (IGIYFVFLGYYTEMLLFAALV). Topologically, residues 312–371 (GLACFIYGLLSMENNRTSTEICDPDIGGQMIMCPLCDEVCDYWRLNTTCLHSKFSHLFDN) are extracellular. N-linked (GlcNAc...) asparagine glycans are attached at residues asparagine 326, asparagine 357, and asparagine 371. A helical transmembrane segment spans residues 372–392 (ESTVFFALFMGIWVTLFLEFW). Topologically, residues 393-453 (KQRQARLEYE…CHRIPWYFVS (61 aa)) are cytoplasmic. Residues 454–474 (GTTVTFGMALLLSSMVSILIY) traverse the membrane as a helical segment. Residues 475–502 (RLSVFATFASFMESEATLQSVKSFFTPQ) lie on the Extracellular side of the membrane. Residues 503-523 (LATALSGSCLNCIVILILNFF) traverse the membrane as a helical segment. At 524–548 (YEKISAWITKMEIPRTHQEYESSLT) the chain is on the cytoplasmic side. Residues 549 to 569 (LKMFLFQFVNYYSSCFYVAFF) traverse the membrane as a helical segment. The Extracellular segment spans residues 570-667 (KGKFVGYPGS…RGLFYEYLET (98 aa)). A helical membrane pass occupies residues 668-688 (VIQFGFATLFVASFPLAPLFA). Over 689–723 (LMNNIMGIRVDAWKLTTQYRRPVAAKAHSIGVWQD) the chain is Cytoplasmic. A helical transmembrane segment spans residues 724–744 (ILFGMAIVSVATNAFIVSFTS). Over 745-825 (DIIPRLVYFY…FWHVLAAKMT (81 aa)) the chain is Extracellular. Asparagine 759, asparagine 769, and asparagine 782 each carry an N-linked (GlcNAc...) asparagine glycan. The helical transmembrane segment at 826–846 (FIIVMEHVVFLFKFLLAWLIP) threads the bilayer. At 847-904 (DVPKDVVEKIKREKLMTIKIIHDFELNKLKENLDVEYGNIMKNVLVDEDNSLKAKTTV) the chain is on the cytoplasmic side.

The protein belongs to the anoctamin family. As to expression, highly expressed in skeletal muscle, bone tissues and thyroid gland.

Its subcellular location is the endoplasmic reticulum membrane. The protein resides in the cell membrane. In terms of biological role, plays a role in plasma membrane repair in a process involving annexins. Does not exhibit calcium-activated chloride channel (CaCC) activity. The polypeptide is Anoctamin-5 (Ano5) (Mus musculus (Mouse)).